The sequence spans 89 residues: Small ribosomal subunit protein uS15 (89 aa).

It belongs to the universal ribosomal protein uS15 family. In terms of assembly, part of the 30S ribosomal subunit. Forms a bridge to the 50S subunit in the 70S ribosome, contacting the 23S rRNA.

Functionally, one of the primary rRNA binding proteins, it binds directly to 16S rRNA where it helps nucleate assembly of the platform of the 30S subunit by binding and bridging several RNA helices of the 16S rRNA. Its function is as follows. Forms an intersubunit bridge (bridge B4) with the 23S rRNA of the 50S subunit in the ribosome. The protein is Small ribosomal subunit protein uS15 of Shewanella amazonensis (strain ATCC BAA-1098 / SB2B).